A 206-amino-acid polypeptide reads, in one-letter code: uncharacterized protein (206 aa).

Residues 147–206 (REEKAQKSKSKSRNQDERGSPLDERLGPKVSDLTLMERIFQVRRKPRKSRRDRRSRVSKR) form a disordered region. Positions 159-173 (RNQDERGSPLDERLG) are enriched in basic and acidic residues. Positions 187 to 206 (QVRRKPRKSRRDRRSRVSKR) are enriched in basic residues.

This is an uncharacterized protein from Schizosaccharomyces pombe (strain 972 / ATCC 24843) (Fission yeast).